A 170-amino-acid chain; its full sequence is Protein SprT (170 aa).

The 144-residue stretch at 22–165 (LQLANQHLGT…RQCGEKLQFI (144 aa)) folds into the SprT-like domain. His-78 contacts Zn(2+). Glu-79 is an active-site residue. Residue His-82 participates in Zn(2+) binding.

It belongs to the SprT family. Requires Zn(2+) as cofactor.

The protein resides in the cytoplasm. This is Protein SprT from Yersinia pseudotuberculosis serotype IB (strain PB1/+).